Consider the following 454-residue polypeptide: Phosphoglucosamine mutase (454 aa).

Ser-104 acts as the Phosphoserine intermediate in catalysis. Mg(2+)-binding residues include Ser-104, Asp-244, Asp-246, and Asp-248. The residue at position 104 (Ser-104) is a Phosphoserine.

It belongs to the phosphohexose mutase family. It depends on Mg(2+) as a cofactor. In terms of processing, activated by phosphorylation.

The catalysed reaction is alpha-D-glucosamine 1-phosphate = D-glucosamine 6-phosphate. Catalyzes the conversion of glucosamine-6-phosphate to glucosamine-1-phosphate. The sequence is that of Phosphoglucosamine mutase from Lacticaseibacillus paracasei (strain ATCC 334 / BCRC 17002 / CCUG 31169 / CIP 107868 / KCTC 3260 / NRRL B-441) (Lactobacillus paracasei).